Reading from the N-terminus, the 146-residue chain is MVIYYGKKNCTLLLLLFILCNIYSGSNILLISCSFFFLVSGTSIQLNIINANRQAANMYPSLKSILDTIIGVKSDIKKLNIQLINVQIAIDMALVLRGNNSDTSTNVTGPNVIANQKIKQQVTIIKTIFEKSVSLPNVPTVAYVII.

A signal peptide spans 1–24 (MVIYYGKKNCTLLLLLFILCNIYS). N-linked (GlcNAc...) asparagine glycosylation is found at Asn-99 and Asn-106.

This is an uncharacterized protein from Saccharomyces cerevisiae (strain ATCC 204508 / S288c) (Baker's yeast).